Here is a 622-residue protein sequence, read N- to C-terminus: Pyranose 2-oxidase (622 aa).

A signal peptide spans 1–28 (MSASSSDPFHSFAKTSFTSKAAKRATAH). A propeptide spanning residues 29–37 (SLPPLPGPG) is cleaved from the precursor. A Tele-8alpha-FAD histidine modification is found at histidine 167. Positions 449 and 451 each coordinate substrate. Histidine 546 serves as the catalytic Proton acceptor. The active site involves asparagine 591.

Belongs to the GMC oxidoreductase family. As to quaternary structure, homotetramer. Requires FAD as cofactor. Not glycosylated.

The protein resides in the periplasm. The catalysed reaction is D-glucose + O2 = 2-dehydro-D-glucose + H2O2. Catalyzes the oxidation of various aldopyranoses and disaccharides on carbon-2 to the corresponding 2-keto sugars concomitant with the reduction of O(2) to H(2)O(2). Plays an important role in lignin degradation of wood rot fungi by supplying the essential cosubstrate H(2)O(2) for the ligninolytic peroxidases, lignin peroxidase and manganese-dependent peroxidase. The preferred substrate is D-glucose which is converted to 2-dehydro-D-glucose, an intermediate of a secondary metabolic pathway leading to the antibiotic cortalcerone. Also acts on D-xylose, together with D-glucose the major sugars derived from wood, on L-sorbose, D-galactose and 1,5-anhydroglucitol, a diagnostic marker of diabetes mellitus. This chain is Pyranose 2-oxidase (p2ox), found in Phlebiopsis gigantea (White-rot fungus).